The chain runs to 179 residues: Large ribosomal subunit protein uL5 (179 aa).

The protein belongs to the universal ribosomal protein uL5 family. Part of the 50S ribosomal subunit; part of the 5S rRNA/L5/L18/L25 subcomplex. Contacts the 5S rRNA and the P site tRNA. Forms a bridge to the 30S subunit in the 70S ribosome.

Its function is as follows. This is one of the proteins that bind and probably mediate the attachment of the 5S RNA into the large ribosomal subunit, where it forms part of the central protuberance. In the 70S ribosome it contacts protein S13 of the 30S subunit (bridge B1b), connecting the 2 subunits; this bridge is implicated in subunit movement. Contacts the P site tRNA; the 5S rRNA and some of its associated proteins might help stabilize positioning of ribosome-bound tRNAs. This Aeromonas salmonicida (strain A449) protein is Large ribosomal subunit protein uL5.